Here is a 171-residue protein sequence, read N- to C-terminus: 3-hydroxydecanoyl-[acyl-carrier-protein] dehydratase (171 aa).

His-70 is a catalytic residue.

Belongs to the thioester dehydratase family. FabA subfamily. In terms of assembly, homodimer.

It localises to the cytoplasm. It carries out the reaction a (3R)-hydroxyacyl-[ACP] = a (2E)-enoyl-[ACP] + H2O. The enzyme catalyses (3R)-hydroxydecanoyl-[ACP] = (2E)-decenoyl-[ACP] + H2O. The catalysed reaction is (2E)-decenoyl-[ACP] = (3Z)-decenoyl-[ACP]. It functions in the pathway lipid metabolism; fatty acid biosynthesis. In terms of biological role, necessary for the introduction of cis unsaturation into fatty acids. Catalyzes the dehydration of (3R)-3-hydroxydecanoyl-ACP to E-(2)-decenoyl-ACP and then its isomerization to Z-(3)-decenoyl-ACP. Can catalyze the dehydratase reaction for beta-hydroxyacyl-ACPs with saturated chain lengths up to 16:0, being most active on intermediate chain length. The sequence is that of 3-hydroxydecanoyl-[acyl-carrier-protein] dehydratase from Shewanella putrefaciens (strain CN-32 / ATCC BAA-453).